The following is a 594-amino-acid chain: Potassium-transporting ATPase potassium-binding subunit (594 aa).

Helical transmembrane passes span 3–23 (ADFL…APLL), 67–87 (AVAM…LQRL), 136–156 (ALTV…IALV), 179–199 (LYVL…QGVV), 287–307 (LEML…GEMV), 314–334 (VAIL…AAYF), 415–435 (GLYG…LMIG), 453–473 (VALV…VAVL), 519–539 (VLLG…ILAL), and 562–582 (LFVA…YVPA).

Belongs to the KdpA family. In terms of assembly, the system is composed of three essential subunits: KdpA, KdpB and KdpC.

The protein localises to the cell inner membrane. Its function is as follows. Part of the high-affinity ATP-driven potassium transport (or Kdp) system, which catalyzes the hydrolysis of ATP coupled with the electrogenic transport of potassium into the cytoplasm. This subunit binds the periplasmic potassium ions and delivers the ions to the membrane domain of KdpB through an intramembrane tunnel. The chain is Potassium-transporting ATPase potassium-binding subunit from Bordetella bronchiseptica (strain ATCC BAA-588 / NCTC 13252 / RB50) (Alcaligenes bronchisepticus).